Here is a 349-residue protein sequence, read N- to C-terminus: AA9 family lytic polysaccharide monooxygenase C (349 aa).

A signal peptide spans 1 to 19 (MKSTFGLLALAAAAKLVSA). The Cu(2+) site is built by H20 and H102. The cysteines at positions 62 and 183 are disulfide-linked. H169 contacts O2. Y180 lines the Cu(2+) pocket. Residues 233–304 (DGSSSGSSGS…SGSNSGSDSC (72 aa)) form a disordered region. Composition is skewed to low complexity over residues 234–262 (GSSS…AAPT) and 269–304 (TSAT…SDSC). One can recognise a CBM1 domain in the interval 311-347 (GSVKIYGQCGGQNYSGPTSCEAGLICKEWNPYYHQCV). Cystine bridges form between C319-C336 and C330-C346. N-linked (GlcNAc...) asparagine glycosylation occurs at N323.

It belongs to the polysaccharide monooxygenase AA9 family. Requires Cu(2+) as cofactor.

It localises to the secreted. The catalysed reaction is [(1-&gt;4)-beta-D-glucosyl]n+m + reduced acceptor + O2 = 4-dehydro-beta-D-glucosyl-[(1-&gt;4)-beta-D-glucosyl]n-1 + [(1-&gt;4)-beta-D-glucosyl]m + acceptor + H2O.. Functionally, lytic polysaccharide monooxygenase (LPMO) that depolymerizes crystalline and amorphous polysaccharides via the oxidation of scissile alpha- or beta-(1-4)-glycosidic bonds, yielding C4 oxidation products. Catalysis by LPMOs requires the reduction of the active-site copper from Cu(II) to Cu(I) by a reducing agent and H(2)O(2) or O(2) as a cosubstrate. Active on cellulose and cello-oligosaccharides, as well as plant cell wall-derived hemicellulosic polysaccharides. Also active on cello-oligosaccharides such as cellohexaose, cellopentaose or cellotetraose. In Aspergillus fumigatus (strain ATCC MYA-4609 / CBS 101355 / FGSC A1100 / Af293) (Neosartorya fumigata), this protein is AA9 family lytic polysaccharide monooxygenase C.